The chain runs to 343 residues: Ribosomal RNA small subunit methyltransferase C (343 aa).

This sequence belongs to the methyltransferase superfamily. RsmC family. Monomer.

It localises to the cytoplasm. It carries out the reaction guanosine(1207) in 16S rRNA + S-adenosyl-L-methionine = N(2)-methylguanosine(1207) in 16S rRNA + S-adenosyl-L-homocysteine + H(+). Specifically methylates the guanine in position 1207 of 16S rRNA in the 30S particle. This Escherichia coli (strain ATCC 8739 / DSM 1576 / NBRC 3972 / NCIMB 8545 / WDCM 00012 / Crooks) protein is Ribosomal RNA small subunit methyltransferase C.